Here is a 540-residue protein sequence, read N- to C-terminus: 2-isopropylmalate synthase (540 aa).

In terms of domain architecture, Pyruvate carboxyltransferase spans 8-271 (VLIFDTTLRD…NPFFGRESDS (264 aa)). 4 residues coordinate Mn(2+): aspartate 17, histidine 208, histidine 210, and asparagine 244. Residues 408–540 (QLRLVQVSCG…AVLADRRPGI (133 aa)) form a regulatory domain region.

The protein belongs to the alpha-IPM synthase/homocitrate synthase family. LeuA type 1 subfamily. As to quaternary structure, homodimer. Requires Mn(2+) as cofactor.

It localises to the cytoplasm. It catalyses the reaction 3-methyl-2-oxobutanoate + acetyl-CoA + H2O = (2S)-2-isopropylmalate + CoA + H(+). It functions in the pathway amino-acid biosynthesis; L-leucine biosynthesis; L-leucine from 3-methyl-2-oxobutanoate: step 1/4. Catalyzes the condensation of the acetyl group of acetyl-CoA with 3-methyl-2-oxobutanoate (2-ketoisovalerate) to form 3-carboxy-3-hydroxy-4-methylpentanoate (2-isopropylmalate). This Prochlorococcus marinus (strain MIT 9303) protein is 2-isopropylmalate synthase.